We begin with the raw amino-acid sequence, 248 residues long: 2,3-dihydro-2,3-dihydroxybenzoate dehydrogenase (248 aa).

9 to 33 (WVTGAGKGIGYATALAFVEAGAKVT) provides a ligand contact to NAD(+). Substrate is bound at residue S131. Y144 (proton acceptor) is an active-site residue.

Belongs to the short-chain dehydrogenases/reductases (SDR) family. In terms of assembly, homotetramer; dimer of dimers. EntA and EntE interact together.

The catalysed reaction is (2S,3S)-2,3-dihydroxy-2,3-dihydrobenzoate + NAD(+) = 2,3-dihydroxybenzoate + NADH + H(+). Its pathway is siderophore biosynthesis; enterobactin biosynthesis. With respect to regulation, inhibited by cis-2-hydroxy-3-cyclohexen-1-carboxylate, cis-2-hydroxycyclohexane-1-carboxylate and trans-2-hydroxycyclohexane-1-carboxylate. Involved in the biosynthesis of the siderophore enterobactin (enterochelin), which is a macrocyclic trimeric lactone of N-(2,3-dihydroxybenzoyl)-serine. Catalyzes the reversible NAD-dependent oxidation of the C3-hydroxyl group of 2,3-dihydro-2,3-dihydroxybenzoate (2,3-diDHB), producing the transient intermediate 2-hydroxy-3-oxo-4,6-cyclohexadiene-1-carboxylate, which undergoes rapid aromatization to the final product, 2,3-dihydroxybenzoate (2,3-DHB). Only the compounds with a C3-hydroxyl group such as methyl 2,3-dihydro-2,3-dihydroxybenzoate, methyl-3-hydroxy-1,4-cyclohexadiene-1-carboxylate, trans-3-hydroxy-2-cyclohexene-1-carboxylate, cis-3-hydroxy-4-cyclohexene-1-carboxylate, cis-3-hydroxycyclohexane-1-carboxylic acid are oxidized to the corresponding ketone products. The stereospecificity of the C3 allylic alcohol group oxidation is 3R in a 1R,3R dihydro substrate. It can also increase the DHB-AMP ligase activity of EntE by interaction EntE. The sequence is that of 2,3-dihydro-2,3-dihydroxybenzoate dehydrogenase from Escherichia coli (strain K12).